A 392-amino-acid polypeptide reads, in one-letter code: 1-deoxy-D-xylulose 5-phosphate reductoisomerase (392 aa).

Threonine 10, glycine 11, serine 12, isoleucine 13, asparagine 38, and asparagine 124 together coordinate NADPH. Position 125 (lysine 125) interacts with 1-deoxy-D-xylulose 5-phosphate. Glutamate 126 provides a ligand contact to NADPH. Aspartate 150 contacts Mn(2+). 4 residues coordinate 1-deoxy-D-xylulose 5-phosphate: serine 151, glutamate 152, serine 176, and histidine 199. Glutamate 152 is a Mn(2+) binding site. Glycine 205 serves as a coordination point for NADPH. 4 residues coordinate 1-deoxy-D-xylulose 5-phosphate: serine 212, asparagine 217, lysine 218, and glutamate 221. Glutamate 221 is a Mn(2+) binding site.

The protein belongs to the DXR family. Requires Mg(2+) as cofactor. It depends on Mn(2+) as a cofactor.

The catalysed reaction is 2-C-methyl-D-erythritol 4-phosphate + NADP(+) = 1-deoxy-D-xylulose 5-phosphate + NADPH + H(+). It functions in the pathway isoprenoid biosynthesis; isopentenyl diphosphate biosynthesis via DXP pathway; isopentenyl diphosphate from 1-deoxy-D-xylulose 5-phosphate: step 1/6. Catalyzes the NADPH-dependent rearrangement and reduction of 1-deoxy-D-xylulose-5-phosphate (DXP) to 2-C-methyl-D-erythritol 4-phosphate (MEP). The protein is 1-deoxy-D-xylulose 5-phosphate reductoisomerase of Synechococcus sp. (strain JA-2-3B'a(2-13)) (Cyanobacteria bacterium Yellowstone B-Prime).